Here is a 364-residue protein sequence, read N- to C-terminus: 3-isopropylmalate dehydrogenase (364 aa).

NAD(+) is bound at residue Gly79–Glu92. Substrate-binding residues include Arg100, Arg110, Arg139, and Asp228. Positions 228, 252, and 256 each coordinate Mg(2+). NAD(+) is bound at residue Gly286–Asn298.

It belongs to the isocitrate and isopropylmalate dehydrogenases family. LeuB type 1 subfamily. In terms of assembly, homodimer. Requires Mg(2+) as cofactor. Mn(2+) serves as cofactor.

The protein localises to the cytoplasm. The catalysed reaction is (2R,3S)-3-isopropylmalate + NAD(+) = 4-methyl-2-oxopentanoate + CO2 + NADH. It functions in the pathway amino-acid biosynthesis; L-leucine biosynthesis; L-leucine from 3-methyl-2-oxobutanoate: step 3/4. Its function is as follows. Catalyzes the oxidation of 3-carboxy-2-hydroxy-4-methylpentanoate (3-isopropylmalate) to 3-carboxy-4-methyl-2-oxopentanoate. The product decarboxylates to 4-methyl-2 oxopentanoate. The sequence is that of 3-isopropylmalate dehydrogenase from Sodalis glossinidius (strain morsitans).